A 407-amino-acid polypeptide reads, in one-letter code: Imidazolonepropionase (407 aa).

2 residues coordinate Fe(3+): H74 and H76. 2 residues coordinate Zn(2+): H74 and H76. 4-imidazolone-5-propanoate-binding residues include R83, Y146, and H179. Residue Y146 coordinates N-formimidoyl-L-glutamate. H244 provides a ligand contact to Fe(3+). H244 contributes to the Zn(2+) binding site. Q247 provides a ligand contact to 4-imidazolone-5-propanoate. Fe(3+) is bound at residue D319. D319 provides a ligand contact to Zn(2+). N-formimidoyl-L-glutamate contacts are provided by N321 and G323. A 4-imidazolone-5-propanoate-binding site is contributed by T324.

The protein belongs to the metallo-dependent hydrolases superfamily. HutI family. It depends on Zn(2+) as a cofactor. The cofactor is Fe(3+).

The protein localises to the cytoplasm. The enzyme catalyses 4-imidazolone-5-propanoate + H2O = N-formimidoyl-L-glutamate. Its pathway is amino-acid degradation; L-histidine degradation into L-glutamate; N-formimidoyl-L-glutamate from L-histidine: step 3/3. In terms of biological role, catalyzes the hydrolytic cleavage of the carbon-nitrogen bond in imidazolone-5-propanoate to yield N-formimidoyl-L-glutamate. It is the third step in the universal histidine degradation pathway. This chain is Imidazolonepropionase, found in Salmonella enteritidis PT4 (strain P125109).